A 323-amino-acid polypeptide reads, in one-letter code: ATP synthase gamma chain (323 aa).

It belongs to the ATPase gamma chain family. F-type ATPases have 2 components, CF(1) - the catalytic core - and CF(0) - the membrane proton channel. CF(1) has five subunits: alpha(3), beta(3), gamma(1), delta(1), epsilon(1). CF(0) has three main subunits: a, b and c.

The protein localises to the cell inner membrane. Its function is as follows. Produces ATP from ADP in the presence of a proton gradient across the membrane. The gamma chain is believed to be important in regulating ATPase activity and the flow of protons through the CF(0) complex. In Rickettsia peacockii (strain Rustic), this protein is ATP synthase gamma chain.